Consider the following 200-residue polypeptide: Ribonuclease HII (200 aa).

The region spanning 6 to 200 is the RNase H type-2 domain; it reads ESIAGVDEVG…KLFAVHGSLT (195 aa). A divalent metal cation contacts are provided by Asp-12, Glu-13, and Asp-108.

It belongs to the RNase HII family. Requires Mn(2+) as cofactor. The cofactor is Mg(2+).

It localises to the cytoplasm. The enzyme catalyses Endonucleolytic cleavage to 5'-phosphomonoester.. In terms of biological role, endonuclease that specifically degrades the RNA of RNA-DNA hybrids. In Prochlorococcus marinus (strain MIT 9303), this protein is Ribonuclease HII.